The following is a 116-amino-acid chain: Ig heavy chain V region 441 (116 aa).

Positions 1–18 (MDFGLIFFIVALLKGVQC) are cleaved as a signal peptide. An Ig-like domain is found at 19–116 (EVKLLESGGG…EDTALYYCAR (98 aa)).

This is Ig heavy chain V region 441 from Mus musculus (Mouse).